A 273-amino-acid chain; its full sequence is tRNA pseudouridine synthase B (273 aa).

D38 functions as the Nucleophile in the catalytic mechanism.

This sequence belongs to the pseudouridine synthase TruB family. Type 1 subfamily.

It catalyses the reaction uridine(55) in tRNA = pseudouridine(55) in tRNA. In terms of biological role, responsible for synthesis of pseudouridine from uracil-55 in the psi GC loop of transfer RNAs. This is tRNA pseudouridine synthase B from Campylobacter concisus (strain 13826).